A 972-amino-acid polypeptide reads, in one-letter code: Coatomer subunit beta (972 aa).

HEAT repeat units lie at residues Leu79–His113, Glu133–His170, Gly317–Ile354, Glu397–Gln434, and Arg481–Pro518. The tract at residues Leu494–Pro522 is disordered.

In terms of assembly, oligomeric complex that consists of at least the alpha, beta, beta', gamma, delta, epsilon and zeta subunits.

It is found in the cytoplasm. The protein resides in the golgi apparatus membrane. It localises to the cytoplasmic vesicle. The protein localises to the COPI-coated vesicle membrane. In terms of biological role, the coatomer is a cytosolic protein complex that binds to dilysine motifs and reversibly associates with Golgi non-clathrin-coated vesicles, which further mediate biosynthetic protein transport from the ER, via the Golgi up to the trans Golgi network. Coatomer complex is required for budding from Golgi membranes, and is essential for the retrograde Golgi-to-ER transport of dilysine-tagged proteins. The protein is Coatomer subunit beta of Candida glabrata (strain ATCC 2001 / BCRC 20586 / JCM 3761 / NBRC 0622 / NRRL Y-65 / CBS 138) (Yeast).